The chain runs to 570 residues: Sulfite reductase [NADPH] hemoprotein beta-component (570 aa).

[4Fe-4S] cluster is bound by residues C434, C440, C479, and C483. C483 serves as a coordination point for siroheme.

It belongs to the nitrite and sulfite reductase 4Fe-4S domain family. In terms of assembly, alpha(8)-beta(8). The alpha component is a flavoprotein, the beta component is a hemoprotein. Requires siroheme as cofactor. The cofactor is [4Fe-4S] cluster.

It carries out the reaction hydrogen sulfide + 3 NADP(+) + 3 H2O = sulfite + 3 NADPH + 4 H(+). The protein operates within sulfur metabolism; hydrogen sulfide biosynthesis; hydrogen sulfide from sulfite (NADPH route): step 1/1. Component of the sulfite reductase complex that catalyzes the 6-electron reduction of sulfite to sulfide. This is one of several activities required for the biosynthesis of L-cysteine from sulfate. This Salmonella paratyphi A (strain ATCC 9150 / SARB42) protein is Sulfite reductase [NADPH] hemoprotein beta-component.